Here is a 275-residue protein sequence, read N- to C-terminus: MSNKITILLAVLLAVVACAQAHASHQRRVPYPLPRFLPRPHHTVSNHRIVGGFEIDVAETPYQVSLQRSKRHICGGSVLSGKWILTAAHCTDGSQPASLTVRLGSSRHASGGSVIHVARIVQHPDYDQETIDYDYSLLELESVLTFSNKVQPIALPEQDEAVEDGIMTIVSGWGSTKSAIESNAILRAANVPTVNQDECNQAYHKSEGITERMLCAGYQQGGKDACQGDSGGPLVAEDKLIGVVSWGAGCAQPGYPGVYARVAVVRDWIRETCGV.

Residues 1–18 (MSNKITILLAVLLAVVAC) form the signal peptide. The propeptide at 19–48 (AQAHASHQRRVPYPLPRFLPRPHHTVSNHR) is activation peptide. In terms of domain architecture, Peptidase S1 spans 49-274 (IVGGFEIDVA…VRDWIRETCG (226 aa)). Cysteines 74 and 90 form a disulfide. Active-site charge relay system residues include His89 and Asp134. 2 disulfide bridges follow: Cys199–Cys215 and Cys226–Cys250. Residue Ser230 is the Charge relay system of the active site.

It belongs to the peptidase S1 family. In terms of tissue distribution, expressed in the midgut. Expression levels drop a few hours after blood feeding and pick up again 28 hours later.

The protein resides in the secreted. It catalyses the reaction Preferential cleavage: Arg-|-Xaa, Lys-|-Xaa.. In terms of biological role, constitutive trypsin that is expressed 2 days after emergence, coinciding with host seeking behavior of the female. The protein is Trypsin-4 (TRYP4) of Anopheles gambiae (African malaria mosquito).